A 423-amino-acid polypeptide reads, in one-letter code: ATP-dependent Clp protease ATP-binding subunit ClpX (423 aa).

Positions 1–50 constitute a ClpX-type ZB domain; sequence MTDDTEYRCSFCGKEHHQVDDLIAGPDVRICSECVVLSCEIVEDRRNEAL. Zn(2+) is bound by residues cysteine 9, cysteine 12, cysteine 31, and cysteine 34. An ATP-binding site is contributed by 126-133; sequence PTGCGKTY.

Belongs to the ClpX chaperone family. Component of the ClpX-ClpP complex. Forms a hexameric ring that, in the presence of ATP, binds to fourteen ClpP subunits assembled into a disk-like structure with a central cavity, resembling the structure of eukaryotic proteasomes.

In terms of biological role, ATP-dependent specificity component of the Clp protease. It directs the protease to specific substrates. Can perform chaperone functions in the absence of ClpP. The protein is ATP-dependent Clp protease ATP-binding subunit ClpX of Tropheryma whipplei (strain Twist) (Whipple's bacillus).